A 524-amino-acid chain; its full sequence is Serine/threonine-protein kinase PAK 2 (524 aa).

Residues 1–81 (MSDNGELEDK…PEISPPSDFE (81 aa)) form a disordered region. Serine 2 bears the N-acetylserine mark. Residues serine 2, serine 20, serine 55, serine 58, and serine 59 each carry the phosphoserine modification. Threonine 60 carries the phosphothreonine modification. N6-acetyllysine is present on lysine 62. Serine 64 is subject to Phosphoserine. Positions 67 to 81 (KEKERPEISPPSDFE) are enriched in basic and acidic residues. The interval 69–112 (KERPEISPPSDFEHTIHVGFDAVTGEFTGMPEQWARLLQTSNIT) is GTPase-binding. The segment at 69–137 (KERPEISPPS…KFYDSNTVKQ (69 aa)) is autoregulatory region. Residues 74–87 (ISPPSDFEHTIHVG) enclose the CRIB domain. The segment at 88 to 248 (FDAVTGEFTG…IVSIGDPKKK (161 aa)) is linker. The residue at position 128 (lysine 128) is an N6-acetyllysine. Threonine 134 carries the phosphothreonine modification. A Phosphotyrosine modification is found at tyrosine 139. A Phosphoserine modification is found at serine 141. Residues 142–190 (FTPPEKDGFPSGTPALNTKGSETSAVVTEEDDDDEDAAPPVIAPRPDHT) are disordered. A Phosphothreonine modification is found at threonine 143. A Phosphoserine modification is found at serine 152. Phosphothreonine occurs at positions 154, 159, and 169. Residues 155 to 167 (PALNTKGSETSAV) show a composition bias toward polar residues. The segment covering 169 to 178 (TEEDDDDEDA) has biased composition (acidic residues). The residue at position 197 (serine 197) is a Phosphoserine. Positions 204-228 (APVGDSNVDSGAKSSDKQKKKAKMT) are disordered. The short motif at 245–251 (PKKKYTR) is the Nuclear localization signal element. The region spanning 249–500 (YTRYEKIGQG…AKELLQHPFL (252 aa)) is the Protein kinase domain. ATP contacts are provided by residues 255–263 (IGQGASGTV) and lysine 278. Catalysis depends on aspartate 368, which acts as the Proton acceptor. The residue at position 402 (threonine 402) is a Phosphothreonine; by autocatalysis.

The protein belongs to the protein kinase superfamily. STE Ser/Thr protein kinase family. STE20 subfamily. In terms of assembly, interacts tightly with GTP-bound but not GDP-bound CDC42/p21 and RAC1. Interacts with SH3MD4. Interacts with SCRIB. Interacts with ARHGEF7 and GIT1. PAK-2p34 interacts with ARHGAP10. Interacts with RAC1. Post-translationally, full-length PAK2 is autophosphorylated when activated by CDC42/p21. Following cleavage, both peptides, PAK-2p27 and PAK-2p34, become highly autophosphorylated. Autophosphorylation of PAK-2p27 can occur in the absence of any effectors and is dependent on phosphorylation of Thr-402, because PAK-2p27 is acting as an exogenous substrate. In terms of processing, during apoptosis proteolytically cleaved by caspase-3 or caspase-3-like proteases to yield active PAK-2p34. Ubiquitinated, leading to its proteasomal degradation.

It localises to the cytoplasm. The protein resides in the nucleus. Its subcellular location is the perinuclear region. It is found in the membrane. It carries out the reaction L-seryl-[protein] + ATP = O-phospho-L-seryl-[protein] + ADP + H(+). The catalysed reaction is L-threonyl-[protein] + ATP = O-phospho-L-threonyl-[protein] + ADP + H(+). Activated by binding small G proteins. Binding of GTP-bound CDC42 or RAC1 to the autoregulatory region releases monomers from the autoinhibited dimer, enables phosphorylation of Thr-402 and allows the kinase domain to adopt an active structure. Following caspase cleavage, autophosphorylated PAK-2p34 is constitutively active. Functionally, serine/threonine protein kinase that plays a role in a variety of different signaling pathways including cytoskeleton regulation, cell motility, cell cycle progression, apoptosis or proliferation. Acts as a downstream effector of the small GTPases CDC42 and RAC1. Activation by the binding of active CDC42 and RAC1 results in a conformational change and a subsequent autophosphorylation on several serine and/or threonine residues. Full-length PAK2 stimulates cell survival and cell growth. Phosphorylates MAPK4 and MAPK6 and activates the downstream target MAPKAPK5, a regulator of F-actin polymerization and cell migration. Phosphorylates JUN and plays an important role in EGF-induced cell proliferation. Phosphorylates many other substrates including histone H4 to promote assembly of H3.3 and H4 into nucleosomes, BAD, ribosomal protein S6, or MBP. Phosphorylates CASP7, thereby preventing its activity. Additionally, associates with ARHGEF7 and GIT1 to perform kinase-independent functions such as spindle orientation control during mitosis. On the other hand, apoptotic stimuli such as DNA damage lead to caspase-mediated cleavage of PAK2, generating PAK-2p34, an active p34 fragment that translocates to the nucleus and promotes cellular apoptosis involving the JNK signaling pathway. Caspase-activated PAK2 phosphorylates MKNK1 and reduces cellular translation. This chain is Serine/threonine-protein kinase PAK 2 (Pak2), found in Rattus norvegicus (Rat).